Consider the following 443-residue polypeptide: Ribulose bisphosphate carboxylase large chain (443 aa).

Asparagine 89 and threonine 139 together coordinate substrate. The Proton acceptor role is filled by lysine 141. Lysine 143 is a binding site for substrate. Mg(2+) is bound by residues lysine 167, aspartate 169, and glutamate 170. At lysine 167 the chain carries N6-carboxylysine. Histidine 260 functions as the Proton acceptor in the catalytic mechanism. Substrate is bound by residues arginine 261, histidine 293, and serine 345.

The protein belongs to the RuBisCO large chain family. Type I subfamily. Heterohexadecamer of 8 large chains and 8 small chains; disulfide-linked. The disulfide link is formed within the large subunit homodimers. Mg(2+) serves as cofactor. In terms of processing, the disulfide bond which can form in the large chain dimeric partners within the hexadecamer appears to be associated with oxidative stress and protein turnover.

The protein resides in the plastid. Its subcellular location is the chloroplast. It carries out the reaction 2 (2R)-3-phosphoglycerate + 2 H(+) = D-ribulose 1,5-bisphosphate + CO2 + H2O. The catalysed reaction is D-ribulose 1,5-bisphosphate + O2 = 2-phosphoglycolate + (2R)-3-phosphoglycerate + 2 H(+). RuBisCO catalyzes two reactions: the carboxylation of D-ribulose 1,5-bisphosphate, the primary event in carbon dioxide fixation, as well as the oxidative fragmentation of the pentose substrate in the photorespiration process. Both reactions occur simultaneously and in competition at the same active site. This Verbena bonariensis (Argentinian vervain) protein is Ribulose bisphosphate carboxylase large chain.